The primary structure comprises 226 residues: Urease accessory protein UreG (226 aa).

Positions 1–26 (MPPHFLDGQPHGHTDRPRRVRQPGEP) are disordered. Residue 33–40 (GPVGSGKT) participates in GTP binding.

It belongs to the SIMIBI class G3E GTPase family. UreG subfamily. Homodimer. UreD, UreF and UreG form a complex that acts as a GTP-hydrolysis-dependent molecular chaperone, activating the urease apoprotein by helping to assemble the nickel containing metallocenter of UreC. The UreE protein probably delivers the nickel.

It is found in the cytoplasm. Its function is as follows. Facilitates the functional incorporation of the urease nickel metallocenter. This process requires GTP hydrolysis, probably effectuated by UreG. This Mycolicibacterium vanbaalenii (strain DSM 7251 / JCM 13017 / BCRC 16820 / KCTC 9966 / NRRL B-24157 / PYR-1) (Mycobacterium vanbaalenii) protein is Urease accessory protein UreG.